Here is a 218-residue protein sequence, read N- to C-terminus: Glycoprotein UL1 (218 aa).

A signal peptide spans 1–27; that stretch reads MGVQCNSKLLLLAVLITIILSSILVQA. Residues 178–198 form a helical membrane-spanning segment; that stretch reads VATHVGWTATVVIIICVLTYV.

The protein belongs to the RL11 family.

Its subcellular location is the virion membrane. This chain is Glycoprotein UL1 (UL1), found in Homo sapiens (Human).